We begin with the raw amino-acid sequence, 414 residues long: Serine hydroxymethyltransferase (414 aa).

Residues Leu116 and 120–122 (GHL) contribute to the (6S)-5,6,7,8-tetrahydrofolate site. An N6-(pyridoxal phosphate)lysine modification is found at Lys224. (6S)-5,6,7,8-tetrahydrofolate is bound by residues Glu240 and 348–350 (SPF).

This sequence belongs to the SHMT family. As to quaternary structure, homodimer. The cofactor is pyridoxal 5'-phosphate.

Its subcellular location is the cytoplasm. It catalyses the reaction (6R)-5,10-methylene-5,6,7,8-tetrahydrofolate + glycine + H2O = (6S)-5,6,7,8-tetrahydrofolate + L-serine. The protein operates within one-carbon metabolism; tetrahydrofolate interconversion. Its pathway is amino-acid biosynthesis; glycine biosynthesis; glycine from L-serine: step 1/1. Catalyzes the reversible interconversion of serine and glycine with tetrahydrofolate (THF) serving as the one-carbon carrier. This reaction serves as the major source of one-carbon groups required for the biosynthesis of purines, thymidylate, methionine, and other important biomolecules. Also exhibits THF-independent aldolase activity toward beta-hydroxyamino acids, producing glycine and aldehydes, via a retro-aldol mechanism. The chain is Serine hydroxymethyltransferase from Campylobacter jejuni subsp. jejuni serotype O:2 (strain ATCC 700819 / NCTC 11168).